Reading from the N-terminus, the 392-residue chain is Putative cystathionine gamma-lyase (392 aa).

The segment covering M1–A10 has biased composition (polar residues). Residues M1 to T41 form a disordered region. The residue at position 216 (K216) is an N6-(pyridoxal phosphate)lysine.

It belongs to the trans-sulfuration enzymes family. The cofactor is pyridoxal 5'-phosphate.

It is found in the cytoplasm. The catalysed reaction is L,L-cystathionine + H2O = 2-oxobutanoate + L-cysteine + NH4(+). It participates in amino-acid biosynthesis; L-cysteine biosynthesis; L-cysteine from L-homocysteine and L-serine: step 2/2. In Streptomyces coelicolor (strain ATCC BAA-471 / A3(2) / M145), this protein is Putative cystathionine gamma-lyase (cysA).